We begin with the raw amino-acid sequence, 246 residues long: Alpha-tubulin N-acetyltransferase (246 aa).

In terms of domain architecture, N-acetyltransferase spans 21–202 (LTLVPDGVSR…NNFVVFHSFF (182 aa)). Acetyl-CoA is bound by residues 135–148 (FYVD…GYGK) and 172–181 (SNKLLGFLRK).

The protein belongs to the acetyltransferase ATAT1 family.

It catalyses the reaction L-lysyl-[alpha-tubulin] + acetyl-CoA = N(6)-acetyl-L-lysyl-[alpha-tubulin] + CoA + H(+). In terms of biological role, specifically acetylates 'Lys-40' in alpha-tubulin on the lumenal side of microtubules. Promotes microtubule destabilization and accelerates microtubule dynamics; this activity may be independent of acetylation activity. Acetylates alpha-tubulin with a slow enzymatic rate, due to a catalytic site that is not optimized for acetyl transfer. Enters the microtubule through each end and diffuses quickly throughout the lumen of microtubules. Acetylates only long/old microtubules because of its slow acetylation rate since it does not have time to act on dynamically unstable microtubules before the enzyme is released. This is Alpha-tubulin N-acetyltransferase from Leishmania infantum.